The primary structure comprises 569 residues: Urease subunit alpha (569 aa).

Positions 131-569 (GGMDAHIHYI…LPMAQRYFLF (439 aa)) constitute a Urease domain. The Ni(2+) site is built by His-136, His-138, and Lys-218. An N6-carboxylysine modification is found at Lys-218. A substrate-binding site is contributed by His-220. Ni(2+) contacts are provided by His-247 and His-273. His-321 functions as the Proton donor in the catalytic mechanism. Asp-361 lines the Ni(2+) pocket.

Belongs to the metallo-dependent hydrolases superfamily. Urease alpha subunit family. Heterotrimer of UreA (gamma), UreB (beta) and UreC (alpha) subunits. Three heterotrimers associate to form the active enzyme. Ni cation serves as cofactor. Post-translationally, carboxylation allows a single lysine to coordinate two nickel ions.

It is found in the cytoplasm. It carries out the reaction urea + 2 H2O + H(+) = hydrogencarbonate + 2 NH4(+). The protein operates within nitrogen metabolism; urea degradation; CO(2) and NH(3) from urea (urease route): step 1/1. In Agrobacterium fabrum (strain C58 / ATCC 33970) (Agrobacterium tumefaciens (strain C58)), this protein is Urease subunit alpha.